A 72-amino-acid chain; its full sequence is Sperm protein associated with the nucleus on the X chromosome N1 (72 aa).

A disordered region spans residues 1 to 44; sequence MEQPTSSINGEKRKSPCESNNENDEMQETPNRDLAPEPSLKKMK.

The protein belongs to the SPAN-X family.

This is Sperm protein associated with the nucleus on the X chromosome N1 (SPANXN1) from Homo sapiens (Human).